A 376-amino-acid chain; its full sequence is 3-dehydroquinate synthase (376 aa).

Residues 115–119, 139–140, lysine 152, and lysine 161 contribute to the NAD(+) site; these read GVIGD and TS. Glutamate 194, histidine 256, and histidine 275 together coordinate Zn(2+).

This sequence belongs to the sugar phosphate cyclases superfamily. Dehydroquinate synthase family. It depends on Co(2+) as a cofactor. Requires Zn(2+) as cofactor. NAD(+) serves as cofactor.

Its subcellular location is the cytoplasm. It carries out the reaction 7-phospho-2-dehydro-3-deoxy-D-arabino-heptonate = 3-dehydroquinate + phosphate. It functions in the pathway metabolic intermediate biosynthesis; chorismate biosynthesis; chorismate from D-erythrose 4-phosphate and phosphoenolpyruvate: step 2/7. Functionally, catalyzes the conversion of 3-deoxy-D-arabino-heptulosonate 7-phosphate (DAHP) to dehydroquinate (DHQ). The protein is 3-dehydroquinate synthase of Rhizobium johnstonii (strain DSM 114642 / LMG 32736 / 3841) (Rhizobium leguminosarum bv. viciae).